The sequence spans 44 residues: Large ribosomal subunit protein P2 (44 aa).

Methionine 1 carries the N-acetylmethionine modification. Serine 17 and serine 19 each carry phosphoserine. The residue at position 21 (lysine 21) is an N6-acetyllysine; alternate. N6-succinyllysine; alternate is present on lysine 21.

The protein belongs to the eukaryotic ribosomal protein P1/P2 family. In terms of assembly, heterodimer with RPLP1 at the lateral ribosomal stalk of the large ribosomal subunit. Phosphorylated.

Its function is as follows. Plays an important role in the elongation step of protein synthesis. The protein is Large ribosomal subunit protein P2 (RPLP2) of Oryctolagus cuniculus (Rabbit).